Here is a 389-residue protein sequence, read N- to C-terminus: Chalcone synthase 1 (389 aa).

Residue C164 is part of the active site.

It belongs to the thiolase-like superfamily. Chalcone/stilbene synthases family.

The catalysed reaction is (E)-4-coumaroyl-CoA + 3 malonyl-CoA + 3 H(+) = 2',4,4',6'-tetrahydroxychalcone + 3 CO2 + 4 CoA. The protein operates within secondary metabolite biosynthesis; flavonoid biosynthesis. The primary product of this enzyme is 4,2',4',6'-tetrahydroxychalcone (also termed naringenin-chalcone or chalcone) which can under specific conditions spontaneously isomerize into naringenin. The sequence is that of Chalcone synthase 1 (CHS1) from Trifolium subterraneum (Subterranean clover).